Here is a 237-residue protein sequence, read N- to C-terminus: Phosphoribosylaminoimidazole-succinocarboxamide synthase (237 aa).

This sequence belongs to the SAICAR synthetase family.

The catalysed reaction is 5-amino-1-(5-phospho-D-ribosyl)imidazole-4-carboxylate + L-aspartate + ATP = (2S)-2-[5-amino-1-(5-phospho-beta-D-ribosyl)imidazole-4-carboxamido]succinate + ADP + phosphate + 2 H(+). Its pathway is purine metabolism; IMP biosynthesis via de novo pathway; 5-amino-1-(5-phospho-D-ribosyl)imidazole-4-carboxamide from 5-amino-1-(5-phospho-D-ribosyl)imidazole-4-carboxylate: step 1/2. This is Phosphoribosylaminoimidazole-succinocarboxamide synthase from Klebsiella pneumoniae (strain 342).